Consider the following 357-residue polypeptide: Guanine nucleotide-binding protein alpha-1 subunit (357 aa).

A lipid anchor (N-myristoyl glycine) is attached at glycine 2. Cysteine 4 carries S-palmitoyl cysteine lipidation. Residues 32 to 357 (NIIKLLLLGA…STKLKGCGLY (326 aa)) enclose the G-alpha domain. Residues 35–48 (KLLLLGAGESGKST) form a G1 motif region. GTP is bound by residues glutamate 43, serine 44, glycine 45, lysine 46, serine 47, threonine 48, aspartate 151, leucine 176, threonine 182, glycine 204, asparagine 270, lysine 271, aspartate 273, and alanine 329. Serine 47 serves as a coordination point for Mg(2+). Residues 174 to 182 (DILHTRVPT) are G2 motif. Mg(2+) is bound at residue threonine 182. Residues 197–206 (FRVFDVGGQR) are G3 motif. Residues 266-273 (ILFLNKID) form a G4 motif region. Positions 327–332 (TCATDT) are G5 motif.

This sequence belongs to the G-alpha family. In terms of assembly, g proteins are composed of 3 units; alpha, beta and gamma. The alpha chain contains the guanine nucleotide binding site. Mg(2+) is required as a cofactor.

Its function is as follows. Guanine nucleotide-binding proteins (G proteins) are involved as modulators or transducers in various transmembrane signaling systems. This Caenorhabditis elegans protein is Guanine nucleotide-binding protein alpha-1 subunit (gpa-1).